The following is a 507-amino-acid chain: 3-octaprenyl-4-hydroxybenzoate carboxy-lyase (507 aa).

Residue N177 participates in Mn(2+) binding. Residues 180–182 (IYR), 194–196 (RWL), and 199–200 (RG) each bind prenylated FMN. E243 contributes to the Mn(2+) binding site. D302 acts as the Proton donor in catalysis.

The protein belongs to the UbiD family. As to quaternary structure, homohexamer. It depends on prenylated FMN as a cofactor. The cofactor is Mn(2+).

The protein resides in the cell membrane. It catalyses the reaction a 4-hydroxy-3-(all-trans-polyprenyl)benzoate + H(+) = a 2-(all-trans-polyprenyl)phenol + CO2. Its pathway is cofactor biosynthesis; ubiquinone biosynthesis. In terms of biological role, catalyzes the decarboxylation of 3-octaprenyl-4-hydroxy benzoate to 2-octaprenylphenol, an intermediate step in ubiquinone biosynthesis. The chain is 3-octaprenyl-4-hydroxybenzoate carboxy-lyase from Cupriavidus metallidurans (strain ATCC 43123 / DSM 2839 / NBRC 102507 / CH34) (Ralstonia metallidurans).